The chain runs to 542 residues: MSKEIKFSSDARTAMMRGIDILADTVKTTLGPKGRNVVLEKSYGSPLITNDGVTIAKEIELEDHFENMGAKLVSEVASKTNDIAGDGTTTATVLTQAIVREGLKNVTAGANPVGIRRGIELAAETAVASIKEMAIPVHDKSAIAQVATVSSRSEKVGEYISDAMERVGSDGVITIEESKGMQTELDVVEGMQFDRGYLSQYMVSNTEKMVAELDNPYILITDKKISNIQEILPLLEQILKTNRPLLIVADDVDGEALPTLVLNKIKGVFNVVAVKAPGFGDRRKAQLEDLAILTGGTVITEELGLDLKDATLEALGQAAKATVDKDHTTIVEGAGSVGAISDRVAIIKAQIEKITSDFDREKLQERLAKLAGGVAVVKVGAATETELKAMKLLIEDALNATRAAVEEGIVSGGGTALVNAIAALDKLSEEGDIQTGINIVRRALEEPVRQIAANAGYEGSVIIDKLRSEKVGTGFNAATGQWVNMIEEGIVDPAKVTRSALQNAASVAGLILTTEAVVANKPEPAAPAMPPMDPSMGMGGMM.

Residues 29-32 (TLGP), 86-90 (DGTTT), Gly413, 476-478 (NAA), and Asp492 contribute to the ATP site.

Belongs to the chaperonin (HSP60) family. Forms a cylinder of 14 subunits composed of two heptameric rings stacked back-to-back. Interacts with the co-chaperonin GroES.

Its subcellular location is the cytoplasm. It carries out the reaction ATP + H2O + a folded polypeptide = ADP + phosphate + an unfolded polypeptide.. Its function is as follows. Together with its co-chaperonin GroES, plays an essential role in assisting protein folding. The GroEL-GroES system forms a nano-cage that allows encapsulation of the non-native substrate proteins and provides a physical environment optimized to promote and accelerate protein folding. The protein is Chaperonin GroEL of Lactococcus lactis subsp. cremoris (strain MG1363).